A 152-amino-acid polypeptide reads, in one-letter code: Plant UBX domain-containing protein 12 (152 aa).

The interval Lys-32–Glu-61 is disordered. One can recognise a UBX domain in the interval Asp-67–Thr-150.

In Arabidopsis thaliana (Mouse-ear cress), this protein is Plant UBX domain-containing protein 12.